The chain runs to 471 residues: Glutamate--tRNA ligase (471 aa).

The short motif at 9–19 (PSPTGYLHVGG) is the 'HIGH' region element. Zn(2+)-binding residues include C98, C100, C125, and H127. Positions 237-241 (KLSKR) match the 'KMSKS' region motif. K240 is a binding site for ATP.

The protein belongs to the class-I aminoacyl-tRNA synthetase family. Glutamate--tRNA ligase type 1 subfamily. Monomer. Requires Zn(2+) as cofactor.

The protein localises to the cytoplasm. It carries out the reaction tRNA(Glu) + L-glutamate + ATP = L-glutamyl-tRNA(Glu) + AMP + diphosphate. Catalyzes the attachment of glutamate to tRNA(Glu) in a two-step reaction: glutamate is first activated by ATP to form Glu-AMP and then transferred to the acceptor end of tRNA(Glu). The chain is Glutamate--tRNA ligase from Salmonella arizonae (strain ATCC BAA-731 / CDC346-86 / RSK2980).